The chain runs to 597 residues: Adenine deaminase 2 (597 aa).

The protein belongs to the metallo-dependent hydrolases superfamily. Adenine deaminase family. Mn(2+) serves as cofactor.

The catalysed reaction is adenine + H2O + H(+) = hypoxanthine + NH4(+). This is Adenine deaminase 2 from Agrobacterium fabrum (strain C58 / ATCC 33970) (Agrobacterium tumefaciens (strain C58)).